We begin with the raw amino-acid sequence, 163 residues long: MTALRDYVKSFLLVELLQGLRLTGKHFLSRSVTLEYPEEKTPKSPRFRGMHALRRYPNGEERCIACKLCEAVCPALAITIEAGPREDDGTRRTTLYEIDMFKCIYCGFCEESCPVDSIVETREHEYHMEHREERVFDKARLLANGDKYEAQIAADRAADAPYR.

2 4Fe-4S ferredoxin-type domains span residues 53-83 and 94-123; these read LRRY…IEAG and TLYE…ETRE. [4Fe-4S] cluster-binding residues include Cys-63, Cys-66, Cys-69, Cys-73, Cys-103, Cys-106, Cys-109, and Cys-113.

Belongs to the complex I 23 kDa subunit family. NDH-1 is composed of 14 different subunits. Subunits NuoA, H, J, K, L, M, N constitute the membrane sector of the complex. The cofactor is [4Fe-4S] cluster.

The protein localises to the cell inner membrane. It catalyses the reaction a quinone + NADH + 5 H(+)(in) = a quinol + NAD(+) + 4 H(+)(out). NDH-1 shuttles electrons from NADH, via FMN and iron-sulfur (Fe-S) centers, to quinones in the respiratory chain. The immediate electron acceptor for the enzyme in this species is believed to be ubiquinone. Couples the redox reaction to proton translocation (for every two electrons transferred, four hydrogen ions are translocated across the cytoplasmic membrane), and thus conserves the redox energy in a proton gradient. The chain is NADH-quinone oxidoreductase subunit I from Alkalilimnicola ehrlichii (strain ATCC BAA-1101 / DSM 17681 / MLHE-1).